Consider the following 415-residue polypeptide: L-cysteine:1D-myo-inositol 2-amino-2-deoxy-alpha-D-glucopyranoside ligase 2 (415 aa).

Cysteine 44 serves as a coordination point for Zn(2+). Residues 44–47 (CGIT), threonine 59, and 82–84 (NIT) contribute to the L-cysteinyl-5'-AMP site. Residues 46–56 (ITPYDSTHLGH) carry the 'HIGH' region motif. The 'ERGGDP' region motif lies at 188 to 193 (ERGGDP). Tryptophan 228 contributes to the L-cysteinyl-5'-AMP binding site. Cysteine 232 provides a ligand contact to Zn(2+). L-cysteinyl-5'-AMP is bound at residue 250 to 252 (GSD). Histidine 257 serves as a coordination point for Zn(2+). Isoleucine 284 is an L-cysteinyl-5'-AMP binding site. Residues 290–294 (KMSKS) carry the 'KMSKS' region motif.

It belongs to the class-I aminoacyl-tRNA synthetase family. MshC subfamily. Monomer. Zn(2+) serves as cofactor.

The catalysed reaction is 1D-myo-inositol 2-amino-2-deoxy-alpha-D-glucopyranoside + L-cysteine + ATP = 1D-myo-inositol 2-(L-cysteinylamino)-2-deoxy-alpha-D-glucopyranoside + AMP + diphosphate + H(+). Catalyzes the ATP-dependent condensation of GlcN-Ins and L-cysteine to form L-Cys-GlcN-Ins. This is L-cysteine:1D-myo-inositol 2-amino-2-deoxy-alpha-D-glucopyranoside ligase 2 from Corynebacterium jeikeium (strain K411).